The following is a 347-amino-acid chain: Phenylalanine--tRNA ligase alpha subunit (347 aa).

E262 is a Mg(2+) binding site.

Belongs to the class-II aminoacyl-tRNA synthetase family. Phe-tRNA synthetase alpha subunit type 1 subfamily. In terms of assembly, tetramer of two alpha and two beta subunits. It depends on Mg(2+) as a cofactor.

Its subcellular location is the cytoplasm. It catalyses the reaction tRNA(Phe) + L-phenylalanine + ATP = L-phenylalanyl-tRNA(Phe) + AMP + diphosphate + H(+). The polypeptide is Phenylalanine--tRNA ligase alpha subunit (Roseiflexus castenholzii (strain DSM 13941 / HLO8)).